We begin with the raw amino-acid sequence, 187 residues long: MEKKETKNETEKTNKQDNKNTKSQKKENLNLVNSDKKITELENEISNLKDLYLRKQAEFENFRKRLEKEKDNFVKFANETIMKDVVNFLDNLERAINSSKKSKDFDNLLTGISMIENEILSIFDKKYNLKKFGENGENFDPSRHEAISIEEKEDFKNPEIVEVYQKGYCYNDRILRTAKVKVAQSKN.

A disordered region spans residues 1-30 (MEKKETKNETEKTNKQDNKNTKSQKKENLN).

Belongs to the GrpE family. In terms of assembly, homodimer.

The protein resides in the cytoplasm. Functionally, participates actively in the response to hyperosmotic and heat shock by preventing the aggregation of stress-denatured proteins, in association with DnaK and GrpE. It is the nucleotide exchange factor for DnaK and may function as a thermosensor. Unfolded proteins bind initially to DnaJ; upon interaction with the DnaJ-bound protein, DnaK hydrolyzes its bound ATP, resulting in the formation of a stable complex. GrpE releases ADP from DnaK; ATP binding to DnaK triggers the release of the substrate protein, thus completing the reaction cycle. Several rounds of ATP-dependent interactions between DnaJ, DnaK and GrpE are required for fully efficient folding. This is Protein GrpE from Borreliella afzelii (strain PKo) (Borrelia afzelii).